The chain runs to 450 residues: UDP-N-acetylmuramoylalanine--D-glutamate ligase (450 aa).

119-125 contacts ATP; sequence GSNGKTT.

It belongs to the MurCDEF family.

It localises to the cytoplasm. It carries out the reaction UDP-N-acetyl-alpha-D-muramoyl-L-alanine + D-glutamate + ATP = UDP-N-acetyl-alpha-D-muramoyl-L-alanyl-D-glutamate + ADP + phosphate + H(+). Its pathway is cell wall biogenesis; peptidoglycan biosynthesis. In terms of biological role, cell wall formation. Catalyzes the addition of glutamate to the nucleotide precursor UDP-N-acetylmuramoyl-L-alanine (UMA). This Bacillus cereus (strain G9842) protein is UDP-N-acetylmuramoylalanine--D-glutamate ligase.